We begin with the raw amino-acid sequence, 411 residues long: MRFAWTVLFLGQLQFCPLLRCAPQAPREPPAAPGAWRQTIQWENNGQVFSLLSLGAQYQPQRRRDSSATAPRADGNAAAQPRTPILLLRDNRTASARARTPSPSGVAAGRPRPAARHWFQVGFSPSGAGDGASRRAANRTASPQPPQLSNLRPPSHVDRMVGDDPYNPYKYSDDNPYYNYYDTYERPRSGSRHRPGYGTGYFQYGLPDLVPDPYYIQASTYVQKMSMYNLRCAAEENCLASSAYRADVRDYDHRVLLRFPQRVKNQGTSDFLPSRPRYSWEWHSCHQHYHSMDEFSHYDLLDASTQRRVAEGHKASFCLEDTSCDYGYHRRFACTAHTQGLSPGCYDTYAADIDCQWIDITDVQPGNYILKVSVNPSYLVPESDYSNNVVRCEIRYTGHHAYASGCTISPY.

Residues 1-21 (MRFAWTVLFLGQLQFCPLLRC) form the signal peptide. Positions 22-162 (APQAPREPPA…PPSHVDRMVG (141 aa)) are cleaved as a propeptide — removed by BMP1. Residues 60-168 (PQRRRDSSAT…RMVGDDPYNP (109 aa)) form a disordered region. N-linked (GlcNAc...) asparagine glycosylation is found at Asn-91 and Asn-138. Tyr-181 bears the Sulfotyrosine mark. A lysyl-oxidase like region spans residues 207–411 (PDLVPDPYYI…YASGCTISPY (205 aa)). Intrachain disulfides connect Cys-232–Cys-238, Cys-285–Cys-334, Cys-318–Cys-324, Cys-345–Cys-355, and Cys-392–Cys-406. Residues His-286, His-288, and His-290 each coordinate Cu cation. Positions 314 to 349 (KASFCLEDTSCDYGYHRRFACTAHTQGLSPGCYDTY) form a cross-link, lysine tyrosylquinone (Lys-Tyr). Position 349 is a 2',4',5'-topaquinone (Tyr-349).

This sequence belongs to the lysyl oxidase family. Interacts with MFAP4. Interacts (via propeptide) with EFEMP2; this interaction is strong and facilitates formation of ternary complexes with ELN during elastic fiber assembly; this interaction limits interaction of EFEMP2 with FBLN5. It depends on Cu cation as a cofactor. Lysine tyrosylquinone residue is required as a cofactor. The lysine tyrosylquinone cross-link (LTQ) is generated by condensation of the epsilon-amino group of a lysine with a topaquinone produced by oxidation of tyrosine. In terms of processing, proteolytically cleaved by BMP1 which removes the propeptide. Also proteolytically cleaved by ADAMTS2 and ADAMTS14, but not by ADAMTS3, at an additional cleavage site downstream of the BMP1 cleavage site. The propeptide plays a role in directing the deposition of this enzyme to elastic fibers, via interaction with tropoelastin. Cleavage by BMP1 to remove the propeptide does not increase enzymatic activity but increases binding to collagen. Cleavage by ADAMTS2 produces a form with reduced collagen-binding activity. Post-translationally, sulfated at Tyr-181 and also at either Tyr-177 or Tyr-178 which enhances binding to collagen. Aorta and lung.

Its subcellular location is the secreted. The protein localises to the extracellular space. The catalysed reaction is L-lysyl-[protein] + O2 + H2O = (S)-2-amino-6-oxohexanoyl-[protein] + H2O2 + NH4(+). Functionally, responsible for the post-translational oxidative deamination of peptidyl lysine residues in precursors to fibrous collagen and elastin. Regulator of Ras expression. May play a role in tumor suppression. Plays a role in the aortic wall architecture. The chain is Protein-lysine 6-oxidase from Rattus norvegicus (Rat).